The primary structure comprises 341 residues: Methionine import ATP-binding protein MetN 1 (341 aa).

The region spanning 2–241 is the ABC transporter domain; the sequence is IKLNQIVKRY…PQHEVTKRFV (240 aa). Position 38–45 (38–45) interacts with ATP; sequence GFSGAGKS.

Belongs to the ABC transporter superfamily. Methionine importer (TC 3.A.1.24) family. The complex is composed of two ATP-binding proteins (MetN), two transmembrane proteins (MetI) and a solute-binding protein (MetQ).

It localises to the cell membrane. The catalysed reaction is L-methionine(out) + ATP + H2O = L-methionine(in) + ADP + phosphate + H(+). The enzyme catalyses D-methionine(out) + ATP + H2O = D-methionine(in) + ADP + phosphate + H(+). Part of the ABC transporter complex MetNIQ involved in methionine import. Responsible for energy coupling to the transport system. In Staphylococcus epidermidis (strain ATCC 12228 / FDA PCI 1200), this protein is Methionine import ATP-binding protein MetN 1.